The following is a 247-amino-acid chain: 5'-nucleotidase SurE (247 aa).

A divalent metal cation is bound by residues D8, D9, S39, and N91.

This sequence belongs to the SurE nucleotidase family. It depends on a divalent metal cation as a cofactor.

The protein localises to the cytoplasm. It catalyses the reaction a ribonucleoside 5'-phosphate + H2O = a ribonucleoside + phosphate. Functionally, nucleotidase that shows phosphatase activity on nucleoside 5'-monophosphates. The chain is 5'-nucleotidase SurE from Pelobacter propionicus (strain DSM 2379 / NBRC 103807 / OttBd1).